Consider the following 391-residue polypeptide: Sulfate adenylyltransferase (391 aa).

The protein belongs to the sulfate adenylyltransferase family.

It carries out the reaction sulfate + ATP + H(+) = adenosine 5'-phosphosulfate + diphosphate. It functions in the pathway sulfur metabolism; hydrogen sulfide biosynthesis; sulfite from sulfate: step 1/3. This Lactiplantibacillus plantarum (strain ATCC BAA-793 / NCIMB 8826 / WCFS1) (Lactobacillus plantarum) protein is Sulfate adenylyltransferase.